Reading from the N-terminus, the 1845-residue chain is Proteasome adapter and scaffold protein ECM29 (1845 aa).

Position 2 is an N-acetylalanine (alanine 2). HEAT repeat units lie at residues 28 to 65, 107 to 144, 162 to 205, 326 to 362, 387 to 426, 429 to 466, 469 to 507, 683 to 720, 721 to 759, 783 to 820, 829 to 868, 870 to 907, 931 to 969, 975 to 1012, 1013 to 1050, 1112 to 1149, 1152 to 1189, 1194 to 1231, 1243 to 1281, 1285 to 1323, 1348 to 1386, 1390 to 1427, 1517 to 1554, 1558 to 1595, 1605 to 1642, 1646 to 1683, and 1779 to 1822; these read TDEQ…LVHL, YPRL…LIPT, NLAE…QGSS, RDPV…YDGL, PEIK…VGKL, RMPH…LSMM, AYST…ASTV, YPEK…YSVV, VSTV…LGFT, TLPD…LGEI, PSEG…LGYF, VGDG…ITSA, AGAK…LLSL, THKE…LGLV, YELG…VVFQ, AGEQ…WNAL, DKSM…LNDL, PLDD…LKTL, KGAA…LVKI, AGAM…TEQE, LQYL…IVSL, CPQD…MGHL, SFGG…MASI, TSSL…IACV, KSVP…AADI, TKED…ENEK, and TYSS…LATM. Positions 193-207 are enriched in low complexity; that stretch reads QSRQNSSSAQGSSSN. The segment at 193–217 is disordered; that stretch reads QSRQNSSSAQGSSSNSGGGSGIPQP. Residue serine 830 is modified to Phosphoserine. Residue threonine 836 is modified to Phosphothreonine. Lysine 1039 is covalently cross-linked (Glycyl lysine isopeptide (Lys-Gly) (interchain with G-Cter in SUMO1)).

It belongs to the ECM29 family. As to quaternary structure, non-stoichiometric component of the proteasome; associates with the 26S proteasome. Interacts (via N-terminus) with VPS11, VPS26A, VPS36, RAB11FIP4 and RABEP1. Interacts (via C-terminus) with DCTN1, DCTN2, KIF5B, MYH7, MYH10, MYO10 and ARF6.

The protein localises to the endoplasmic reticulum. The protein resides in the endoplasmic reticulum-Golgi intermediate compartment. Its subcellular location is the endosome. It localises to the cytoplasm. It is found in the cytoskeleton. The protein localises to the microtubule organizing center. The protein resides in the centrosome. Its subcellular location is the nucleus. It localises to the multivesicular body. It is found in the cytoplasmic vesicle. Functionally, adapter/scaffolding protein that binds to the 26S proteasome, motor proteins and other compartment specific proteins. May couple the proteasome to different compartments including endosome, endoplasmic reticulum and centrosome. May play a role in ERAD and other enhanced proteolysis. Promotes proteasome dissociation under oxidative stress. The polypeptide is Proteasome adapter and scaffold protein ECM29 (Homo sapiens (Human)).